The chain runs to 288 residues: Phosphatidylglycerol--prolipoprotein diacylglyceryl transferase (288 aa).

The next 4 membrane-spanning stretches (helical) occupy residues 18–38 (WSLRLTWYGVFFTVGIFLACL), 68–88 (FFIYSILFIVPGARLAYVIFY), 107–127 (GLSSHGGVLGFLLWAAIFSWI), and 135–155 (LTFLFLTDLCGSVFGIAAFFI). Residue Arg-156 participates in a 1,2-diacyl-sn-glycero-3-phospho-(1'-sn-glycerol) binding. The next 3 helical transmembrane spans lie at 193–213 (VQLYEGISYLVVSGILYFLSY), 222–242 (GYVTSIACISVAFIRFFAEYV), and 256–276 (LTIGQILSIPLFLFGVALLII).

The protein belongs to the Lgt family.

Its subcellular location is the cell inner membrane. The catalysed reaction is L-cysteinyl-[prolipoprotein] + a 1,2-diacyl-sn-glycero-3-phospho-(1'-sn-glycerol) = an S-1,2-diacyl-sn-glyceryl-L-cysteinyl-[prolipoprotein] + sn-glycerol 1-phosphate + H(+). Its pathway is protein modification; lipoprotein biosynthesis (diacylglyceryl transfer). Catalyzes the transfer of the diacylglyceryl group from phosphatidylglycerol to the sulfhydryl group of the N-terminal cysteine of a prolipoprotein, the first step in the formation of mature lipoproteins. This is Phosphatidylglycerol--prolipoprotein diacylglyceryl transferase from Chlamydia pneumoniae (Chlamydophila pneumoniae).